The chain runs to 869 residues: Rho GTPase-activating protein 27 (869 aa).

The 64-residue stretch at 6–69 (EGDVYVLVEH…PAQYVRELPA (64 aa)) folds into the SH3 domain. The tract at residues 104-137 (GADGSSAEPRGRASSLCGPARQRTSGQRNSLAPG) is disordered. 3 positions are modified to phosphoserine: Ser-155, Ser-215, and Ser-249. 2 WW domains span residues 246–280 (PRLS…SPFE) and 299–333 (ESLE…DETE). Disordered stretches follow at residues 275-299 (WESP…GSGE), 331-389 (ETEE…DLGP), and 447-474 (VPVP…PEEK). The span at 331-343 (ETEELEDDPEEQL) shows a compositional bias: acidic residues. Positions 345–356 (MQPSLSPRSPGQ) are enriched in polar residues. The residue at position 350 (Ser-350) is a Phosphoserine. The region spanning 414–447 (QFTQEQWVRLEDQEGKPYFYNPEDSSVQWELPQV) is the WW 3 domain. Residues Ser-459 and Ser-462 each carry the phosphoserine modification. Thr-464 bears the Phosphothreonine mark. Ser-469 carries the phosphoserine modification. Residues 477–593 (TLDKAGVLHR…WHKAIAEGIE (117 aa)) enclose the PH domain. A disordered region spans residues 598–644 (DLPQREEGEPSSADFGSSERLGSWKEEDVRPNAASPSLNPGSQESDL). A compositionally biased stretch (polar residues) spans 631–642 (ASPSLNPGSQES). The residue at position 632 (Ser-632) is a Phosphoserine. The Rho-GAP domain maps to 677 to 866 (CALAQLCERE…LILHQCADIF (190 aa)).

Interacts with SH3KBP1/CIN85.

The protein localises to the cytoplasm. It is found in the membrane. Rho GTPase-activating protein which may be involved in clathrin-mediated endocytosis. GTPase activators for the Rho-type GTPases act by converting them to an inactive GDP-bound state. Has activity toward CDC42 and RAC1. In Rattus norvegicus (Rat), this protein is Rho GTPase-activating protein 27 (Arhgap27).